A 363-amino-acid chain; its full sequence is Small ribosomal subunit biogenesis GTPase RsgA (363 aa).

The CP-type G domain occupies His112–Leu268. GTP-binding positions include Thr157 to Asp160 and Gly210 to Thr218. Residues Cys291, Cys296, His298, and Cys304 each coordinate Zn(2+). The interval Arg340 to Arg363 is disordered.

It belongs to the TRAFAC class YlqF/YawG GTPase family. RsgA subfamily. Monomer. Associates with 30S ribosomal subunit, binds 16S rRNA. The cofactor is Zn(2+).

The protein resides in the cytoplasm. Functionally, one of several proteins that assist in the late maturation steps of the functional core of the 30S ribosomal subunit. Helps release RbfA from mature subunits. May play a role in the assembly of ribosomal proteins into the subunit. Circularly permuted GTPase that catalyzes slow GTP hydrolysis, GTPase activity is stimulated by the 30S ribosomal subunit. This Xanthomonas oryzae pv. oryzae (strain MAFF 311018) protein is Small ribosomal subunit biogenesis GTPase RsgA.